An 863-amino-acid polypeptide reads, in one-letter code: Scm-like with four MBT domains protein 1 (863 aa).

MBT repeat units follow at residues 20 to 120, 128 to 232, 242 to 346, and 354 to 451; these read FSWE…LEAP, SDWS…LQPP, ADWQ…INPP, and FDWA…LSTP. A disordered region spans residues 638-773; the sequence is KKKNKRIGRP…SDGENKPPSP (136 aa). Residues 660-679 show a composition bias toward basic residues; sequence KTSKRRKRRKNIFVHKKKRS. A compositionally biased stretch (polar residues) spans 680-691; it reads SASVDNTPVGSP. The segment covering 696–710 has biased composition (acidic residues); that stretch reads GEDEDDADDGDDDSL. Ser764 and Ser772 each carry phosphoserine. The region spanning 793–861 is the SAM domain; the sequence is WSVADVVRFI…RIKFAFYEQF (69 aa).

Interacts with MYOD1. Component of the SLC (SFMBT1-LSD1-CoREST) corepressor complex, which also contains KDM1A/LSD1 and RCOR1/CoREST. Interacts with KDM1A/LSD1 and RCOR1/CoREST. Interacts with MYOD1. Interacts with L3MBTL3. As to expression, highly expressed in the testis, low expression was detected in brain, kidney, heart and lung.

The protein localises to the nucleus. Functionally, histone-binding protein, which is part of various corepressor complexes. Mediates the recruitment of corepressor complexes to target genes, followed by chromatin compaction and repression of transcription. Plays a role during myogenesis: required for the maintenance of undifferentiated states of myogenic progenitor cells via interaction with MYOD1. Interaction with MYOD1 leads to the recruitment of associated corepressors and silencing of MYOD1 target genes. Part of the SLC complex in germ cells, where it may play a role during spermatogenesis. In Rattus norvegicus (Rat), this protein is Scm-like with four MBT domains protein 1 (Sfmbt1).